We begin with the raw amino-acid sequence, 172 residues long: Disulfide bond formation protein B (172 aa).

The Cytoplasmic portion of the chain corresponds to Met1–Gln11. A helical membrane pass occupies residues Phe12–Tyr28. Residues Val29–Ile46 are Periplasmic-facing. Cysteines 38 and 41 form a disulfide. A helical transmembrane segment spans residues Ala47–Pro63. Residues Arg64 to Lys70 lie on the Cytoplasmic side of the membrane. The chain crosses the membrane as a helical span at residues Val71–Ala88. Topologically, residues Arg89–Met145 are periplasmic. The cysteines at positions 104 and 131 are disulfide-linked. Residues Trp146–Lys164 form a helical membrane-spanning segment. Residues Val165–His172 lie on the Cytoplasmic side of the membrane.

The protein belongs to the DsbB family.

Its subcellular location is the cell inner membrane. In terms of biological role, required for disulfide bond formation in some periplasmic proteins. Acts by oxidizing the DsbA protein. This is Disulfide bond formation protein B from Xanthomonas axonopodis pv. citri (strain 306).